The chain runs to 346 residues: Phenylalanine--tRNA ligase alpha subunit (346 aa).

Glu-259 contributes to the Mg(2+) binding site.

The protein belongs to the class-II aminoacyl-tRNA synthetase family. Phe-tRNA synthetase alpha subunit type 1 subfamily. Tetramer of two alpha and two beta subunits. It depends on Mg(2+) as a cofactor.

It is found in the cytoplasm. It carries out the reaction tRNA(Phe) + L-phenylalanine + ATP = L-phenylalanyl-tRNA(Phe) + AMP + diphosphate + H(+). The protein is Phenylalanine--tRNA ligase alpha subunit of Lactococcus lactis subsp. lactis (strain IL1403) (Streptococcus lactis).